The following is a 1567-amino-acid chain: Transmembrane protein 131 homolog (1567 aa).

Residues 1 to 32 (MPTQVQMRPLLRIFAEPILLILIFLFTLGAKG) form the signal peptide. Over 33-1049 (EKVLQETFLG…RPGWESSLKN (1017 aa)) the chain is Lumenal. A papD-L domain region spans residues 55–228 (RLVPSRLDFG…TLKPVIRISF (174 aa)). Residues N84, N114, N168, N235, N316, N317, N342, N372, N409, N462, N563, N890, and N1013 are each glycosylated (N-linked (GlcNAc...) asparagine). Residues 1050–1070 (AALVVLLASFGLVLVAAVFDA) traverse the membrane as a helical segment. Topologically, residues 1071-1567 (KAIMVQQNAY…SQRNNHNHMN (497 aa)) are cytoplasmic. A coiled-coil region spans residues 1096 to 1130 (RNIVKLQAEEAAAKAESVQQQQKVKNGQLKELRKR). Disordered stretches follow at residues 1112–1337 (SVQQ…SPDA), 1364–1386 (PTDN…IGDN), and 1502–1567 (PGLE…NHMN). Low complexity-rich tracts occupy residues 1132–1150 (VVNS…SPWS) and 1166–1183 (KTVV…APAA). Residues S1201 and S1258 each carry the phosphoserine modification. A compositionally biased stretch (polar residues) spans 1247-1259 (AKSSPPQQENISP). A compositionally biased stretch (basic and acidic residues) spans 1284–1298 (PGRERERERRSKDQK). Residues 1319–1331 (KLNFGQTTNSTSP) are compositionally biased toward polar residues. Composition is skewed to polar residues over residues 1507–1519 (SARQ…QEQV) and 1536–1561 (LPTQ…SQRN).

Belongs to the TMEM131 family. In terms of assembly, may interact (via PapD-L domain) with collagen proteins (via C-terminus); the interaction is direct and is involved in assembly and TRAPPIII ER-to-Golgi transport complex-dependent secretion of collagen.

It is found in the membrane. Its function is as follows. Collagen binding transmembrane protein involved in collagen secretion, probably by recruiting the ER-to-Golgi transport complex TRAPPIII. The sequence is that of Transmembrane protein 131 homolog from Drosophila melanogaster (Fruit fly).